The primary structure comprises 286 residues: Formamidopyrimidine-DNA glycosylase (286 aa).

The active-site Schiff-base intermediate with DNA is the Pro2. The active-site Proton donor is the Glu3. The active-site Proton donor; for beta-elimination activity is Lys61. 3 residues coordinate DNA: His96, Arg115, and Lys161. The FPG-type zinc-finger motif lies at 247–281 (EAYGREGEPCRRCGRAMRREAFMNRSSYFCPSCQR). The Proton donor; for delta-elimination activity role is filled by Arg271.

The protein belongs to the FPG family. As to quaternary structure, monomer. Requires Zn(2+) as cofactor.

It catalyses the reaction Hydrolysis of DNA containing ring-opened 7-methylguanine residues, releasing 2,6-diamino-4-hydroxy-5-(N-methyl)formamidopyrimidine.. It carries out the reaction 2'-deoxyribonucleotide-(2'-deoxyribose 5'-phosphate)-2'-deoxyribonucleotide-DNA = a 3'-end 2'-deoxyribonucleotide-(2,3-dehydro-2,3-deoxyribose 5'-phosphate)-DNA + a 5'-end 5'-phospho-2'-deoxyribonucleoside-DNA + H(+). Involved in base excision repair of DNA damaged by oxidation or by mutagenic agents. Acts as a DNA glycosylase that recognizes and removes damaged bases. Has a preference for oxidized purines, such as 7,8-dihydro-8-oxoguanine (8-oxoG). Has AP (apurinic/apyrimidinic) lyase activity and introduces nicks in the DNA strand. Cleaves the DNA backbone by beta-delta elimination to generate a single-strand break at the site of the removed base with both 3'- and 5'-phosphates. This chain is Formamidopyrimidine-DNA glycosylase, found in Mycobacteroides abscessus (strain ATCC 19977 / DSM 44196 / CCUG 20993 / CIP 104536 / JCM 13569 / NCTC 13031 / TMC 1543 / L948) (Mycobacterium abscessus).